A 188-amino-acid polypeptide reads, in one-letter code: Ribosome-recycling factor (188 aa).

Belongs to the RRF family.

It localises to the cytoplasm. Its function is as follows. Responsible for the release of ribosomes from messenger RNA at the termination of protein biosynthesis. May increase the efficiency of translation by recycling ribosomes from one round of translation to another. In Akkermansia muciniphila (strain ATCC BAA-835 / DSM 22959 / JCM 33894 / BCRC 81048 / CCUG 64013 / CIP 107961 / Muc), this protein is Ribosome-recycling factor.